The sequence spans 569 residues: WD repeat-containing protein 20 (569 aa).

A2 carries the N-acetylalanine modification. WD repeat units follow at residues 94-138, 139-210, 211-252, 253-331, 332-426, 427-523, and 524-559; these read RIYK…KETS, KLFN…KSTR, NPLL…FDSV, ELHG…SGSD, EDFQ…NSVP, PPLP…VPLL, and EPLI…CTWG. Residues S357 and S360 each carry the phosphoserine modification. Composition is skewed to polar residues over residues 405–423 and 431–445; these read NATS…TPGN and RSNS…NAGS. Positions 405-445 are disordered; it reads NATSPPAGSNGNSVTTPGNSVPPPLPRSNSLPHSAVSNAGS. Phosphoserine occurs at positions 432, 434, and 465. Positions 450–468 are mediates XPO1-dependent nuclear export of WDR20-USP12 complexes; it reads MDGAIASGVSKFATLSLHD.

In terms of assembly, interacts with USP12; promotes translocation of USP12/WDR20 to the plasma membrane. Component of the USP12/WDR20/WDR48 deubiquitinating complex. Interacts with USP46; contributes to the cytoplasmic localization of the USP46/WDR20 complex. Component of the USP12/DMWD/WDR48 deubiquitinating complex.

It localises to the cytoplasm. Its subcellular location is the nucleus. Its function is as follows. Regulator of deubiquitinating complexes. Activates deubiquitinating activity of complexes containing USP12. Anchors at the base of the ubiquitin-contacting loop of USP12 and remotely modulates the catalytic center of the enzyme. Regulates shuttling of the USP12 deubiquitinase complex between the plasma membrane, cytoplasm and nucleus. This Homo sapiens (Human) protein is WD repeat-containing protein 20 (WDR20).